Reading from the N-terminus, the 1010-residue chain is MASADMSPSRSHPHDATRSPSPRTQSPSPRDEDGSRSPGERTPSPPSRDPSPYRSPGERTPSPSPRRDRSLSPRDQPHSHPRSRSPTPRSQSPSRRSVRSPSPRQGSPARRVDRSSSPRARSPPPRRHSRSPPLRGQPPPPRHRDAGGDYRPVRKERTPTPPPVAVKTEEEKLADARAEYQKLLNLRSQGVYLPPHRLRALQAAITDKKTREYQRMAWEALKKSVNGLVNKVNTANIKFVVPELFGENLIRGRGLFCQSLLKAQHASLPFTPIYACLAAICNTKLPQVGELLVKRLVLRFRKAFKRNDKAVCLSSTMFIAHLVNNQVVHEMIAAQILLLLLAKPTDDSVEIAVGLMREVGLFLEEMSPAIAHAVFDQFRNILHEADIDRRTQYMIEVLFQVRKDKYKDNPVIKEELDLVEEEDQITHRIGLDDEIDPQDGLNVFKMDPNWEENEEEYKKLKAEILGEASDDDEDDDDDDESESGSESEDEEQKALEIKDQSNADLVNLRRTIYLSIQSSADPEEAAHKLMKLRLPAGQEAELVSMIVESCAQEKVYLKFMGLLGERFARLNRMWMDLFEESFAKYYSTIHRYETNKLRNIARFFGHLLATDAIGWHVFSVIHLNEEETTSASRIFIKILFEDLQENIGSAKLKARMSEETLQPSLQGIFPHDEPRNIRFSINYFTSIKMGYLTDEMRTFLANMPKPALPAPPADSDSESVSSYSSYSSYSSRSRSRSLTPRKDTRGRSLSRTPPRRGRGRSYSRTPSRSRSRSRSYSRSVSKSVSRSPPRRRAVESRSPSPPPRGRGRSYDRYSRSPSRSRSRTRSPAAAPPIRRGRSGTRSRSRSYSRSPSPPPARGYPTRGRAPVSNNDRAAAASGKRRREGSYSASRSPHPPPQQRLRRGSYSRSRSRSPIPIRGNGPAGRDTGRAGPAPARGGRRNRSYSRSRTRSPPPLADAATGSRRVVSRSPSPVVGNNKRRRSYSSSRSRSRSSSRSRYRSRSPVAKRGRVD.

Positions M1–R10 are enriched in polar residues. Positions M1–V166 are disordered. A compositionally biased stretch (low complexity) spans R18–S28. 2 stretches are compositionally biased toward basic and acidic residues: residues P29–G39 and P65–H78. Positions R84–A109 are enriched in low complexity. The span at R142–T158 shows a compositional bias: basic and acidic residues. The 184-residue stretch at K222–K405 folds into the MIF4G domain. Residues G466–K498 form a disordered region. A compositionally biased stretch (acidic residues) spans A468–E491. The MI domain maps to N507–L623. Residues L708–D1010 are disordered. Over residues E718–R732 the composition is skewed to low complexity. Residues P753–S775 show a composition bias toward basic residues. A compositionally biased stretch (low complexity) spans Y776–S787. Composition is skewed to basic residues over residues R834–S846 and R899–S910. Residues R911–R935 are compositionally biased toward low complexity. Positions G936–T948 are enriched in basic residues. Over residues S961–V973 the composition is skewed to low complexity. Residues N976–D1010 show a composition bias toward basic residues.

It belongs to the CWC22 family. Associated with the spliceosome.

Its subcellular location is the cytoplasm. The protein localises to the nucleus. Involved in pre-mRNA splicing. This Neurospora crassa (strain ATCC 24698 / 74-OR23-1A / CBS 708.71 / DSM 1257 / FGSC 987) protein is Pre-mRNA-splicing factor cwc22 (msp-1).